A 642-amino-acid polypeptide reads, in one-letter code: Tigger transposable element-derived protein 5 (642 aa).

Pro residues-rich tracts occupy residues 1-10 and 19-43; these read MYPAGPPAGP and LPGPPAPAPAPVPAARPPPPAPGPR. A disordered region spans residues 1–45; sequence MYPAGPPAGPVPRRGRRPLPGPPAPAPAPVPAARPPPPAPGPRPR. Residues 47-98 form the HTH psq-type domain; the sequence is AVKMAFRKAYSIKDKLQAIERVKGGERQASVCRDFGVPGGTLRGWLKDEPKL. 2 DNA-binding regions (H-T-H motif) span residues 74-94 and 145-178; these read QASVCRDFGVPGGTLRGWLKD and PLIQAQAEAFARQIYGPECTFKASHGWFWRWQKR. The 74-residue stretch at 112–185 folds into the HTH CENPB-type domain; it reads QRKKMRLANE…QKRHGISSQR (74 aa). The interval 185-233 is disordered; it reads RFYGEAGPPAPSPAPGPPVKEEPALPSGAGPLPDRAPAPPPPAEGGYGD. 2 stretches are compositionally biased toward pro residues: residues 192-202 and 218-227; these read PPAPSPAPGPP and DRAPAPPPPA. DDE-1 domains lie at 233–357 and 410–477; these read DEQI…VLLV and RAHI…ERCW. The tract at residues 535 to 587 is disordered; sequence LDDDGGPPEGCREEVGPALPPAAPPAPASLPSAMGGGEDEEEATDYGGTSVPT. Over residues 552–562 the composition is skewed to pro residues; the sequence is ALPPAAPPAPA.

The protein belongs to the tigger transposable element derived protein family.

The protein resides in the nucleus. This Homo sapiens (Human) protein is Tigger transposable element-derived protein 5 (TIGD5).